A 165-amino-acid chain; its full sequence is Transcription antitermination protein NusB (165 aa).

Belongs to the NusB family.

Involved in transcription antitermination. Required for transcription of ribosomal RNA (rRNA) genes. Binds specifically to the boxA antiterminator sequence of the ribosomal RNA (rrn) operons. The sequence is that of Transcription antitermination protein NusB from Chlorobium phaeobacteroides (strain DSM 266 / SMG 266 / 2430).